We begin with the raw amino-acid sequence, 145 residues long: METSEELKQRIGDLSYEVTQHAATESPFTGEYDDFFEKGIYVDIVSGEVLFSSLDKFNSGCGWPAFSKPIENRMVINHDDSSYGMRRVEVKSREAGSHLGHVFSDGPKEAGGLRYCINSAALKFIPYEQMEKEGYAQWLTLFDET.

Positions S4–Y127 constitute a MsrB domain. Catalysis depends on C116, which acts as the Nucleophile.

Belongs to the MsrB Met sulfoxide reductase family.

It catalyses the reaction L-methionyl-[protein] + [thioredoxin]-disulfide + H2O = L-methionyl-(R)-S-oxide-[protein] + [thioredoxin]-dithiol. The chain is Peptide methionine sulfoxide reductase MsrB from Streptococcus pyogenes serotype M6 (strain ATCC BAA-946 / MGAS10394).